A 164-amino-acid polypeptide reads, in one-letter code: Transcriptional repressor NrdR (164 aa).

The segment at 3 to 34 (CPFCRHEDSRVVDSRSLDDGSAIRRRRQCQAC) is a zinc-finger region. The ATP-cone domain maps to 46–136 (LTVVKRSGVA…VYRDFESLDD (91 aa)).

The protein belongs to the NrdR family. It depends on Zn(2+) as a cofactor.

Its function is as follows. Negatively regulates transcription of bacterial ribonucleotide reductase nrd genes and operons by binding to NrdR-boxes. This Micrococcus luteus (strain ATCC 4698 / DSM 20030 / JCM 1464 / CCM 169 / CCUG 5858 / IAM 1056 / NBRC 3333 / NCIMB 9278 / NCTC 2665 / VKM Ac-2230) (Micrococcus lysodeikticus) protein is Transcriptional repressor NrdR.